The sequence spans 633 residues: Probable potassium transport system protein Kup 2 (633 aa).

Helical transmembrane passes span 18–38, 61–81, 107–127, 143–163, 173–193, 211–231, 255–275, 287–307, 345–365, 371–391, 402–422, and 427–447; these read FLAL…TSPL, LVSL…VLFL, PVLM…DAMI, VAPA…LLLF, VSVF…AAGV, AIGF…AIFL, WFAV…ALVL, LMFP…ATII, IYLP…MLMF, LAPA…ILAF, ALTA…FLGA, and VHHG…MMWT.

The protein belongs to the HAK/KUP transporter (TC 2.A.72) family.

The protein resides in the cell inner membrane. It carries out the reaction K(+)(in) + H(+)(in) = K(+)(out) + H(+)(out). Transport of potassium into the cell. Likely operates as a K(+):H(+) symporter. This is Probable potassium transport system protein Kup 2 from Rhizobium meliloti (strain 1021) (Ensifer meliloti).